Reading from the N-terminus, the 249-residue chain is Adapter protein MecA (249 aa).

It belongs to the MecA family. As to quaternary structure, homodimer.

In terms of biological role, enables the recognition and targeting of unfolded and aggregated proteins to the ClpC protease or to other proteins involved in proteolysis. The polypeptide is Adapter protein MecA (Streptococcus thermophilus (strain ATCC BAA-491 / LMD-9)).